Consider the following 296-residue polypeptide: NAD kinase (296 aa).

Residue Asp74 is the Proton acceptor of the active site. NAD(+)-binding positions include 74–75, 148–149, Arg176, Asp178, and 189–194; these read DG, ND, and TAYALS.

Belongs to the NAD kinase family. The cofactor is a divalent metal cation.

The protein resides in the cytoplasm. It carries out the reaction NAD(+) + ATP = ADP + NADP(+) + H(+). Functionally, involved in the regulation of the intracellular balance of NAD and NADP, and is a key enzyme in the biosynthesis of NADP. Catalyzes specifically the phosphorylation on 2'-hydroxyl of the adenosine moiety of NAD to yield NADP. This Nitrosomonas europaea (strain ATCC 19718 / CIP 103999 / KCTC 2705 / NBRC 14298) protein is NAD kinase.